The following is a 40-amino-acid chain: Photosystem I reaction center subunit IX (40 aa).

A helical membrane pass occupies residues 12 to 34; sequence APVLLTAWMSLTAGMIIEIQRFF.

Belongs to the PsaJ family.

The protein resides in the plastid. It localises to the chloroplast thylakoid membrane. Its function is as follows. May help in the organization of the PsaE and PsaF subunits. The sequence is that of Photosystem I reaction center subunit IX from Emiliania huxleyi (Coccolithophore).